A 449-amino-acid chain; its full sequence is Protein tweety homolog 1 (449 aa).

The Extracellular portion of the chain corresponds to 1 to 43; the sequence is MSSSHGYRASWWTYILHQVPHTNFQFEVVDNQFAPQEWPYQQA. Residues 44 to 64 traverse the membrane as a helical segment; it reads LLFLASIAGLCLAISLILICV. Topologically, residues 65 to 86 are cytoplasmic; it reads YLIRFCCCSSQEDDDSKSHRVC. A helical transmembrane segment spans residues 87–107; it reads CVTWSCVAAVIICCAGIGIGF. Over 108–212 the chain is Extracellular; it reads YGNSETNDGV…QVNFIEDYRW (105 aa). Residue N128 is glycosylated (N-linked (GlcNAc...) asparagine). Residues 213–233 traverse the membrane as a helical segment; it reads LAYILLLLLDLIICLFTLLGL. Over 234–238 the chain is Cytoplasmic; that stretch reads AKQIK. The helical transmembrane segment at 239–259 threads the bilayer; it reads WLVIVMTVVSFFVLLLSWGSM. The Extracellular segment spans residues 260–388; sequence GLEMATAVGL…LKGLCYDGME (129 aa). 2 disulfide bridges follow: C273–C383 and C301–C368. Residues N282 and N353 are each glycosylated (N-linked (GlcNAc...) asparagine). A helical transmembrane segment spans residues 389 to 409; the sequence is GILFLLLFSFLSALSFTAAIC. The Cytoplasmic portion of the chain corresponds to 410–449; the sequence is SLPRAWKRFQNRDLDYDDMDEDDPFNPQESKRFVQWQSSI.

Belongs to the tweety family. In terms of assembly, homotetramer; disulfide-linked. Homodimer.

The protein resides in the cell membrane. The enzyme catalyses chloride(in) = chloride(out). It carries out the reaction L-glutamate(out) = L-glutamate(in). Functionally, may act as a calcium-independent, swelling-dependent volume-regulated anion channel (VRAC-swell) which plays a pivotal role in the process of regulatory volume decrease (RVD) in the brain through the efflux of anions like chloride and organic osmolytes like glutamate. This chain is Protein tweety homolog 1 (ttyh1), found in Xenopus tropicalis (Western clawed frog).